Consider the following 243-residue polypeptide: Chromosome partition protein MukE (243 aa).

The tract at residues 214–243 is disordered; it reads DSLALEKQADLNEVDDNDELEDELDDEEHA. Positions 225-243 are enriched in acidic residues; that stretch reads NEVDDNDELEDELDDEEHA.

This sequence belongs to the MukE family. Interacts, and probably forms a ternary complex, with MukF and MukB. The complex formation is stimulated by calcium or magnesium.

Its subcellular location is the cytoplasm. The protein localises to the nucleoid. Its function is as follows. Involved in chromosome condensation, segregation and cell cycle progression. May participate in facilitating chromosome segregation by condensation DNA from both sides of a centrally located replisome during cell division. Probably acts via its interaction with MukB and MukF. The chain is Chromosome partition protein MukE from Pasteurella multocida (strain Pm70).